A 294-amino-acid polypeptide reads, in one-letter code: uncharacterized protein (294 aa).

2 disordered regions span residues 25–59 (VQVY…RVRR) and 77–141 (LKDD…FEAP). The segment covering 86–139 (YEELEDDDDDESIEEESDSEFEGESSSDEEESSYDSDSDYDSETEPEDSDDDFE) has biased composition (acidic residues). Positions 201–234 (IKFYKRNTTFTEEELAEIEEDLLAEVKARYNNMK) form a coiled coil. Over residues 242-259 (TIETTEDDKKAGEVNKYD) the composition is skewed to basic and acidic residues. Residues 242–294 (TIETTEDDKKAGEVNKYDIDDDFIEKTESDEEEEITEDDSSEQETVVVEPVDE) are disordered. The segment covering 260–283 (IDDDFIEKTESDEEEEITEDDSSE) has biased composition (acidic residues).

This is an uncharacterized protein from Magallana gigas (Pacific oyster).